The chain runs to 267 residues: Ras-related protein Rab-36 (267 aa).

Val-68, Gly-69, Lys-70, Thr-71, Ser-72, Asp-83, Tyr-86, and Thr-89 together coordinate GTP. Thr-71 contacts Mg(2+). The Switch 1 signature appears at 76–94; that stretch reads RFCKNVFDRDYKATIGVDF. Mg(2+) is bound by residues Thr-89 and Asp-112. The short motif at 113-132 is the Switch 2 element; that stretch reads TAGQEKFKCIASAYYRGAQV. The GTP site is built by Gly-115, Lys-172, Asp-174, Ser-203, Ala-204, and Lys-205. The segment at 243–267 is disordered; the sequence is GDLIQMEGSPPETQESKRPSSLGCC. 2 S-geranylgeranyl cysteine lipidation sites follow: Cys-266 and Cys-267.

It belongs to the small GTPase superfamily. Rab family. The cofactor is Mg(2+). As to expression, ubiquitously present in all tissues examined.

The protein resides in the golgi apparatus membrane. It carries out the reaction GTP + H2O = GDP + phosphate + H(+). Its activity is regulated as follows. Regulated by guanine nucleotide exchange factors (GEFs) which promote the exchange of bound GDP for free GTP. Regulated by GTPase activating proteins (GAPs) which increase the GTP hydrolysis activity. Inhibited by GDP dissociation inhibitors (GDIs). Functionally, the small GTPases Rab are key regulators of intracellular membrane trafficking, from the formation of transport vesicles to their fusion with membranes. Rabs cycle between an inactive GDP-bound form and an active GTP-bound form that is able to recruit to membranes different sets of downstream effectors directly responsible for vesicle formation, movement, tethering and fusion. The sequence is that of Ras-related protein Rab-36 from Homo sapiens (Human).